The chain runs to 433 residues: Homogentisate 1,2-dioxygenase (433 aa).

The active-site Proton acceptor is the histidine 288. 2 residues coordinate Fe cation: histidine 331 and glutamate 337. The homogentisate site is built by tyrosine 346 and histidine 367. Residue histidine 367 participates in Fe cation binding.

The protein belongs to the homogentisate dioxygenase family. In terms of assembly, hexamer; dimer of trimers. Fe cation serves as cofactor.

It catalyses the reaction homogentisate + O2 = 4-maleylacetoacetate + H(+). The protein operates within amino-acid degradation; L-phenylalanine degradation; acetoacetate and fumarate from L-phenylalanine: step 4/6. Involved in the catabolism of homogentisate (2,5-dihydroxyphenylacetate or 2,5-OH-PhAc), a central intermediate in the degradation of phenylalanine and tyrosine. Catalyzes the oxidative ring cleavage of the aromatic ring of homogentisate to yield maleylacetoacetate. This is Homogentisate 1,2-dioxygenase from Pseudomonas putida (strain W619).